The primary structure comprises 545 residues: POTE ankyrin domain family member H (545 aa).

7 ANK repeats span residues leucine 180 to lysine 208, glutamine 209 to isoleucine 238, lysine 242 to isoleucine 271, tyrosine 275 to serine 304, histidine 308 to alanine 337, tyrosine 341 to serine 370, and serine 374 to lysine 404. The segment at serine 406 to glycine 524 is disordered. Basic and acidic residues-rich tracts occupy residues glutamine 414–glycine 429 and glutamate 443–lysine 458. The span at threonine 513–glycine 524 shows a compositional bias: polar residues.

This sequence belongs to the POTE family.

This Homo sapiens (Human) protein is POTE ankyrin domain family member H (POTEH).